The primary structure comprises 177 residues: ATP synthase subunit delta (177 aa).

The protein belongs to the ATPase delta chain family. In terms of assembly, F-type ATPases have 2 components, F(1) - the catalytic core - and F(0) - the membrane proton channel. F(1) has five subunits: alpha(3), beta(3), gamma(1), delta(1), epsilon(1). F(0) has three main subunits: a(1), b(2) and c(10-14). The alpha and beta chains form an alternating ring which encloses part of the gamma chain. F(1) is attached to F(0) by a central stalk formed by the gamma and epsilon chains, while a peripheral stalk is formed by the delta and b chains.

It is found in the cell inner membrane. F(1)F(0) ATP synthase produces ATP from ADP in the presence of a proton or sodium gradient. F-type ATPases consist of two structural domains, F(1) containing the extramembraneous catalytic core and F(0) containing the membrane proton channel, linked together by a central stalk and a peripheral stalk. During catalysis, ATP synthesis in the catalytic domain of F(1) is coupled via a rotary mechanism of the central stalk subunits to proton translocation. Functionally, this protein is part of the stalk that links CF(0) to CF(1). It either transmits conformational changes from CF(0) to CF(1) or is implicated in proton conduction. The sequence is that of ATP synthase subunit delta from Azobacteroides pseudotrichonymphae genomovar. CFP2.